The following is a 629-amino-acid chain: (-)-alpha-pinene synthase, chloroplastic (629 aa).

Residues 1–48 (MSPVSVISLPSDLCLPTSFIDRSGRELIPLHITIPNVAMRRQGKLMTR) constitute a chloroplast transit peptide. Positions 380, 384, and 532 each coordinate Mg(2+). The DDXXD motif signature appears at 380–384 (DDMYD). K(+) is bound at residue Ser540.

Belongs to the terpene synthase family. Tpsd subfamily. Mg(2+) serves as cofactor. Mn(2+) is required as a cofactor. Requires K(+) as cofactor.

Its subcellular location is the plastid. The protein localises to the chloroplast. The enzyme catalyses (2E)-geranyl diphosphate = (1S,5S)-alpha-pinene + diphosphate. The protein operates within terpene metabolism; oleoresin biosynthesis. Involved in defensive oleoresin formation in conifers in response to insect attack or other injury. Involved in monoterpene (C10) olefins biosynthesis. Produces mainly (-)-alpha-pinene (79%) and lesser amounts of (-)-beta-pinene (4.2%), nearly racemic mixtures of camphene (2.8% (+)/2.2% (-)) and limonene (2.4% (+)/3.7% (-)), as well as small amounts of (+)-alpha-pinene (3.3%) and (+)-beta-pinene (2.4%). In Pinus taeda (Loblolly pine), this protein is (-)-alpha-pinene synthase, chloroplastic (PT1).